We begin with the raw amino-acid sequence, 319 residues long: ATP-dependent 6-phosphofructokinase (319 aa).

Gly-11 serves as a coordination point for ATP. Residue 21 to 25 participates in ADP binding; the sequence is RAVVR. Residues 72-73 and 102-105 each bind ATP; these read RC and GDGS. Asp-103 serves as a coordination point for Mg(2+). Position 125-127 (125-127) interacts with substrate; it reads TID. Asp-127 functions as the Proton acceptor in the catalytic mechanism. An ADP-binding site is contributed by Arg-154. Substrate is bound by residues Arg-162 and 169 to 171; that span reads MGR. Residues 185 to 187, Lys-211, and 213 to 215 contribute to the ADP site; these read GAE and KMH. Residues Glu-222, Arg-243, and 249–252 each bind substrate; that span reads HIQR.

Belongs to the phosphofructokinase type A (PFKA) family. ATP-dependent PFK group I subfamily. Prokaryotic clade 'B1' sub-subfamily. Homotetramer. The cofactor is Mg(2+).

The protein resides in the cytoplasm. It carries out the reaction beta-D-fructose 6-phosphate + ATP = beta-D-fructose 1,6-bisphosphate + ADP + H(+). Its pathway is carbohydrate degradation; glycolysis; D-glyceraldehyde 3-phosphate and glycerone phosphate from D-glucose: step 3/4. Its activity is regulated as follows. Allosterically activated by ADP and other diphosphonucleosides, and allosterically inhibited by phosphoenolpyruvate. Functionally, catalyzes the phosphorylation of D-fructose 6-phosphate to fructose 1,6-bisphosphate by ATP, the first committing step of glycolysis. The chain is ATP-dependent 6-phosphofructokinase from Clostridium botulinum (strain ATCC 19397 / Type A).